We begin with the raw amino-acid sequence, 260 residues long: Collagenase (260 aa).

The N-terminal stretch at 1–16 (MKFLLVFALALATTSA) is a signal peptide. A propeptide spanning residues 17 to 30 (FQHPASIFELREGR) is cleaved from the precursor. In terms of domain architecture, Peptidase S1 spans 31 to 257 (IINGYEAYTG…YMDWIQQNTG (227 aa)). Cysteines 60 and 76 form a disulfide. Active-site charge relay system residues include His-75 and Asp-118. 2 cysteine pairs are disulfide-bonded: Cys-181–Cys-196 and Cys-206–Cys-234. Ser-210 (charge relay system) is an active-site residue.

This sequence belongs to the peptidase S1 family.

It localises to the secreted. The enzyme catalyses Hydrolysis of proteins including native collagen at Xaa-|-Ala bond leaving an N-terminal (75%) and a C-terminal (25%) fragment.. With respect to regulation, inhibited by diisopropylfluorophosphate. In terms of biological role, this enzyme is a serine protease capable of degrading the native triple helix of collagen. Also cleaves the B chain of insulin at the 15-Leu-|-Try-16 and 22-Arg-|-Gly-23 bonds. Hydrolyzes casein, but not Px-Pro-Leu-Gly-Pro-DArg, BzArgNHPh, AcTyrNHPh, 2-naphthyl phosphate, 2-naphthyl butyrate, 2-naphthyl caprylate, 2-naphthyl myristate, L-leucine 2-2-naphthylamide, L-valine 2-naphthylamide, L-cysteine 2-naphthylamide or L-glutarylphenylalanine 2-naphthylamide. The protein is Collagenase of Hypoderma lineatum (Early cattle grub).